Consider the following 287-residue polypeptide: MPLLKLVFLGTGGAVPKSDRMLPTIYLEDWLGHRVLLDAGEGAQYRLLQIDVSPASLTLVAITHQHEDHTLGLPGLVITNKFLGGKLKVLAPRSMHKILERLGVEVSDSYEEGRFKITCVEVCHTVDACGWLFQWDVGYKLDLSKVAGLPKWALTNLIRGEAVKVGGRLITPEEVADLTHKRFRRLLYTGDTAPCPQMWKTVGEVDVLIHEATFADDVEPQKAHDEGHSTVADAVEAAKTLKADVLILTHISARYPSKERHKALADAVKPPPHIYIPDDFDTLLIKL.

The Zn(2+) site is built by H64, H66, D68, H69, H124, D191, and H250. Residue D68 is the Proton acceptor of the active site.

Belongs to the RNase Z family. As to quaternary structure, homodimer. Zn(2+) serves as cofactor.

It catalyses the reaction Endonucleolytic cleavage of RNA, removing extra 3' nucleotides from tRNA precursor, generating 3' termini of tRNAs. A 3'-hydroxy group is left at the tRNA terminus and a 5'-phosphoryl group is left at the trailer molecule.. Zinc phosphodiesterase, which displays some tRNA 3'-processing endonuclease activity. Probably involved in tRNA maturation, by removing a 3'-trailer from precursor tRNA. The polypeptide is Ribonuclease Z (Pyrobaculum islandicum (strain DSM 4184 / JCM 9189 / GEO3)).